We begin with the raw amino-acid sequence, 345 residues long: Arginine-hydroxylase NDUFAF5, mitochondrial (345 aa).

The N-terminal 36 residues, Met-1 to Arg-36, are a transit peptide targeting the mitochondrion.

Belongs to the methyltransferase superfamily. In terms of assembly, interacts with NDUFAF8, leading to stabilize NDUFAF5. Interacts with NDUFS7. Interacts with PYURF (via TRM112 domain); the interaction is direct and stabilizes NDUFAF5 protein.

It is found in the mitochondrion inner membrane. Arginine hydroxylase that mediates hydroxylation of 'Arg-111' of NDUFS7 and is involved in the assembly of mitochondrial NADH:ubiquinone oxidoreductase complex (complex I, MT-ND1) at early stages. May also have methyltransferase activity. The polypeptide is Arginine-hydroxylase NDUFAF5, mitochondrial (Homo sapiens (Human)).